The chain runs to 282 residues: Glutamate--LysW ligase ArgX (282 aa).

ATP-binding positions include Lys87, Lys127, 131–137 (GSWGRLV), and 167–178 (QEYINYKSRDIR). One can recognise an ATP-grasp domain in the interval 91–277 (YSKLYREGIP…VAEELVSYVK (187 aa)). Arg192 is a binding site for substrate. Position 202 (Asn202) interacts with ATP. 203 to 204 (IA) is a binding site for substrate. The Mg(2+) site is built by Asp237, Glu250, and Asn252. 256–260 (EFKGF) lines the substrate pocket. The short motif at 259–260 (GF) is the GF motif that is essential for ArgX substrate specificity element.

This sequence belongs to the RimK family. LysX subfamily. As to quaternary structure, homotetramer. Interacts with LysW. The cofactor is Mg(2+).

The enzyme catalyses [amino-group carrier protein]-C-terminal-L-glutamate + L-glutamate + ATP = [amino-group carrier protein]-C-terminal-gamma-(L-glutamyl)-L-glutamate + ADP + phosphate + H(+). It functions in the pathway amino-acid biosynthesis; L-arginine biosynthesis. Functionally, catalyzes the ATP-dependent formation of a covalent bond between the amino group of glutamate and the gamma-carboxyl group of the C-terminal glutamate residue in LysW. The sequence is that of Glutamate--LysW ligase ArgX from Sulfolobus acidocaldarius (strain ATCC 33909 / DSM 639 / JCM 8929 / NBRC 15157 / NCIMB 11770).